Here is a 364-residue protein sequence, read N- to C-terminus: UDP-N-acetylglucosamine--N-acetylmuramyl-(pentapeptide) pyrophosphoryl-undecaprenol N-acetylglucosamine transferase (364 aa).

Residues 12–14 (TGG), Asn124, Arg167, Ser195, Ile249, 268–273 (ALTVSE), and Gln294 contribute to the UDP-N-acetyl-alpha-D-glucosamine site.

This sequence belongs to the glycosyltransferase 28 family. MurG subfamily.

It is found in the cell inner membrane. It catalyses the reaction di-trans,octa-cis-undecaprenyl diphospho-N-acetyl-alpha-D-muramoyl-L-alanyl-D-glutamyl-meso-2,6-diaminopimeloyl-D-alanyl-D-alanine + UDP-N-acetyl-alpha-D-glucosamine = di-trans,octa-cis-undecaprenyl diphospho-[N-acetyl-alpha-D-glucosaminyl-(1-&gt;4)]-N-acetyl-alpha-D-muramoyl-L-alanyl-D-glutamyl-meso-2,6-diaminopimeloyl-D-alanyl-D-alanine + UDP + H(+). Its pathway is cell wall biogenesis; peptidoglycan biosynthesis. In terms of biological role, cell wall formation. Catalyzes the transfer of a GlcNAc subunit on undecaprenyl-pyrophosphoryl-MurNAc-pentapeptide (lipid intermediate I) to form undecaprenyl-pyrophosphoryl-MurNAc-(pentapeptide)GlcNAc (lipid intermediate II). This Alteromonas mediterranea (strain DSM 17117 / CIP 110805 / LMG 28347 / Deep ecotype) protein is UDP-N-acetylglucosamine--N-acetylmuramyl-(pentapeptide) pyrophosphoryl-undecaprenol N-acetylglucosamine transferase.